The chain runs to 241 residues: Spheroidene monooxygenase (241 aa).

This sequence belongs to the CrtA family. The cofactor is heme.

The catalysed reaction is spheroidene + 4 reduced [2Fe-2S]-[ferredoxin] + 2 O2 + 4 H(+) = spheroiden-2-one + 4 oxidized [2Fe-2S]-[ferredoxin] + 3 H2O. The enzyme catalyses spirilloxanthin + 4 reduced [2Fe-2S]-[ferredoxin] + 2 O2 + 4 H(+) = 2-oxospirilloxanthin + 4 oxidized [2Fe-2S]-[ferredoxin] + 3 H2O. It catalyses the reaction 2-oxospirilloxanthin + 4 reduced [2Fe-2S]-[ferredoxin] + 2 O2 + 4 H(+) = 2,2'-dioxospirilloxanthin + 4 oxidized [2Fe-2S]-[ferredoxin] + 3 H2O. It carries out the reaction spheroidene + 2 reduced [2Fe-2S]-[ferredoxin] + O2 + 2 H(+) = 2-hydroxyspheroidene + 2 oxidized [2Fe-2S]-[ferredoxin] + H2O. The catalysed reaction is 2-hydroxyspheroidene + 2 reduced [2Fe-2S]-[ferredoxin] + O2 + 2 H(+) = 2,2-dihydroxyspheroidene + 2 oxidized [2Fe-2S]-[ferredoxin] + H2O. The enzyme catalyses 2,2-dihydroxyspheroidene = spheroiden-2-one + H2O. It catalyses the reaction spirilloxanthin + 2 reduced [2Fe-2S]-[ferredoxin] + O2 + 2 H(+) = 2-hydroxyspirilloxanthin + 2 oxidized [2Fe-2S]-[ferredoxin] + H2O. It carries out the reaction 2-hydroxyspirilloxanthin + 2 reduced [2Fe-2S]-[ferredoxin] + O2 + 2 H(+) = 2,2-dihydroxyspirilloxanthin + 2 oxidized [2Fe-2S]-[ferredoxin] + H2O. The catalysed reaction is 2,2-dihydroxyspirilloxanthin = 2-oxospirilloxanthin + H2O. The enzyme catalyses 2-oxospirilloxanthin + 2 reduced [2Fe-2S]-[ferredoxin] + O2 + 2 H(+) = 2'-hydroxy-2-oxospirilloxanthin + 2 oxidized [2Fe-2S]-[ferredoxin] + H2O. It catalyses the reaction 2'-hydroxy-2-oxospirilloxanthin + 2 reduced [2Fe-2S]-[ferredoxin] + O2 + 2 H(+) = 2',2'-dihydroxy-2-oxospirilloxanthin + 2 oxidized [2Fe-2S]-[ferredoxin] + H2O. It carries out the reaction 2',2'-dihydroxy-2-oxospirilloxanthin = 2,2'-dioxospirilloxanthin + H2O. It functions in the pathway carotenoid biosynthesis; spheroidene biosynthesis. In terms of biological role, involved in the biosynthesis of the carotenoid spheroidene. Catalyzes the introduction of one keto group at the C-2 position of spheroidene. In vitro, can also catalyze the introduction of two keto groups at the C-2 and C-2' positions of spirilloxanthin, but spirilloxanthin biosynthesis pathway is not present in R.capsulatus. The chain is Spheroidene monooxygenase from Rhodobacter capsulatus (strain ATCC BAA-309 / NBRC 16581 / SB1003).